The primary structure comprises 158 residues: 2-C-methyl-D-erythritol 2,4-cyclodiphosphate synthase (158 aa).

A divalent metal cation-binding residues include Asp9 and His11. Residues 9 to 11 (DVH) and 35 to 36 (HS) each bind 4-CDP-2-C-methyl-D-erythritol 2-phosphate. His43 contacts a divalent metal cation. Residues 57-59 (DIG), 62-66 (FPDTD), 101-107 (AQKPKMA), 133-136 (TTTE), Phe140, and Arg143 each bind 4-CDP-2-C-methyl-D-erythritol 2-phosphate.

Belongs to the IspF family. Homotrimer. The cofactor is a divalent metal cation.

The catalysed reaction is 4-CDP-2-C-methyl-D-erythritol 2-phosphate = 2-C-methyl-D-erythritol 2,4-cyclic diphosphate + CMP. It participates in isoprenoid biosynthesis; isopentenyl diphosphate biosynthesis via DXP pathway; isopentenyl diphosphate from 1-deoxy-D-xylulose 5-phosphate: step 4/6. Its function is as follows. Involved in the biosynthesis of isopentenyl diphosphate (IPP) and dimethylallyl diphosphate (DMAPP), two major building blocks of isoprenoid compounds. Catalyzes the conversion of 4-diphosphocytidyl-2-C-methyl-D-erythritol 2-phosphate (CDP-ME2P) to 2-C-methyl-D-erythritol 2,4-cyclodiphosphate (ME-CPP) with a corresponding release of cytidine 5-monophosphate (CMP). In Bacillus licheniformis (strain ATCC 14580 / DSM 13 / JCM 2505 / CCUG 7422 / NBRC 12200 / NCIMB 9375 / NCTC 10341 / NRRL NRS-1264 / Gibson 46), this protein is 2-C-methyl-D-erythritol 2,4-cyclodiphosphate synthase.